Consider the following 566-residue polypeptide: Arginine--tRNA ligase (566 aa).

Positions 129–139 (ANPTGPLHIGH) match the 'HIGH' region motif.

Belongs to the class-I aminoacyl-tRNA synthetase family. Monomer.

It is found in the cytoplasm. It carries out the reaction tRNA(Arg) + L-arginine + ATP = L-arginyl-tRNA(Arg) + AMP + diphosphate. This Wolbachia pipientis subsp. Culex pipiens (strain wPip) protein is Arginine--tRNA ligase.